The sequence spans 198 residues: UDP-N-acetylglucosamine transferase subunit ALG13 (198 aa).

Belongs to the glycosyltransferase 28 family. As to quaternary structure, heterodimer with ALG14 to form a functional enzyme.

It localises to the endoplasmic reticulum. It catalyses the reaction an N-acetyl-alpha-D-glucosaminyl-diphospho-di-trans,poly-cis-dolichol + UDP-N-acetyl-alpha-D-glucosamine = an N,N'-diacetylchitobiosyl-diphospho-di-trans,poly-cis-dolichol + UDP + H(+). In terms of biological role, involved in protein N-glycosylation. Essential for the second step of the dolichol-linked oligosaccharide pathway. This is UDP-N-acetylglucosamine transferase subunit ALG13 (ALG13) from Candida glabrata (strain ATCC 2001 / BCRC 20586 / JCM 3761 / NBRC 0622 / NRRL Y-65 / CBS 138) (Yeast).